The sequence spans 341 residues: Phenylalanine--tRNA ligase alpha subunit (341 aa).

Residue Glu-253 participates in Mg(2+) binding.

This sequence belongs to the class-II aminoacyl-tRNA synthetase family. Phe-tRNA synthetase alpha subunit type 1 subfamily. In terms of assembly, tetramer of two alpha and two beta subunits. Mg(2+) serves as cofactor.

The protein resides in the cytoplasm. The catalysed reaction is tRNA(Phe) + L-phenylalanine + ATP = L-phenylalanyl-tRNA(Phe) + AMP + diphosphate + H(+). This Methylococcus capsulatus (strain ATCC 33009 / NCIMB 11132 / Bath) protein is Phenylalanine--tRNA ligase alpha subunit.